Here is a 610-residue protein sequence, read N- to C-terminus: Scarecrow-like protein 11 (610 aa).

3 disordered regions span residues 32–54, 98–159, and 186–220; these read NNLF…PPTV, QQSP…RRNK, and QEEE…HKTN. Composition is skewed to low complexity over residues 41–52 and 99–119; these read SQNQSSPNDSPP and QSPE…GDQD. Polar residues-rich tracts occupy residues 123-137 and 209-220; these read PSTT…SSGE and GSSNKSKTHKTN. Residues 215–598 enclose the GRAS domain; the sequence is KTHKTNTVDL…RVIYAFSCWK (384 aa). The segment at 222–283 is leucine repeat I (LRI); it reads VDLRSLLTQC…ARITGNISPP (62 aa). A VHIID region spans residues 302–367; sequence YKLFVHTCPI…GGPPMLRVTG (66 aa). The short motif at 333–337 is the VHIID element; sequence LHIVD. The segment at 383-415 is leucine repeat II (LRII); that stretch reads ETGRRLKRFCDQFNVPFEFNFIAKKWETITLDE. The PFYRE stretch occupies residues 424–520; it reads TVVNCIHRLQ…RELLVRDAMS (97 aa). Residues 523-598 are SAW; that stretch reads SCEGAERFAR…RVIYAFSCWK (76 aa).

It belongs to the GRAS family. As to expression, highly expressed in roots and at lower levels in leaves and sepals. Expressed in siliques.

It is found in the nucleus. Functionally, probable transcription factor involved in plant development. In Arabidopsis thaliana (Mouse-ear cress), this protein is Scarecrow-like protein 11 (SCL11).